The primary structure comprises 165 residues: ATP synthase subunit delta, mitochondrial (165 aa).

The N-terminal 27 residues, 1 to 27 (MNSLRIARAALRVRPTAVRAPLQRRGY), are a transit peptide targeting the mitochondrion.

The protein belongs to the ATPase epsilon chain family. In terms of assembly, F-type ATPases have 2 components, CF(1) - the catalytic core - and CF(0) - the membrane proton channel. CF(1) has five subunits: alpha(3), beta(3), gamma(1), delta(1), epsilon(1). CF(0) has three main subunits: a, b and c.

It localises to the mitochondrion. Its subcellular location is the mitochondrion inner membrane. In terms of biological role, mitochondrial membrane ATP synthase (F(1)F(0) ATP synthase or Complex V) produces ATP from ADP in the presence of a proton gradient across the membrane which is generated by electron transport complexes of the respiratory chain. F-type ATPases consist of two structural domains, F(1) - containing the extramembraneous catalytic core, and F(0) - containing the membrane proton channel, linked together by a central stalk and a peripheral stalk. During catalysis, ATP turnover in the catalytic domain of F(1) is coupled via a rotary mechanism of the central stalk subunits to proton translocation. Part of the complex F(1) domain and of the central stalk which is part of the complex rotary element. Rotation of the central stalk against the surrounding alpha(3)beta(3) subunits leads to hydrolysis of ATP in three separate catalytic sites on the beta subunits. This chain is ATP synthase subunit delta, mitochondrial (des), found in Neurospora crassa (strain ATCC 24698 / 74-OR23-1A / CBS 708.71 / DSM 1257 / FGSC 987).